The primary structure comprises 216 residues: Snake venom metalloproteinase HT-1 (216 aa).

The 87-residue stretch at 8-94 (PPVCGNELLE…DCPMDDFHRN (87 aa)) folds into the Disintegrin domain. Ca(2+) contacts are provided by Val-10, Asn-13, Leu-15, Glu-17, Glu-20, and Asp-23. 14 disulfides stabilise this stretch: Cys-11–Cys-40, Cys-22–Cys-35, Cys-24–Cys-30, Cys-34–Cys-57, Cys-48–Cys-54, Cys-53–Cys-79, Cys-66–Cys-86, Cys-73–Cys-105, Cys-98–Cys-110, Cys-117–Cys-167, Cys-132–Cys-178, Cys-145–Cys-155, Cys-162–Cys-204, and Cys-198–Cys-209. Positions 72–74 (ECD) match the D/ECD-tripeptide motif. N-linked (GlcNAc...) asparagine glycosylation occurs at Asn-175.

Belongs to the venom metalloproteinase (M12B) family. P-III subfamily. P-IIIa sub-subfamily. Monomer. Zn(2+) is required as a cofactor. In terms of tissue distribution, expressed by the venom gland.

The protein resides in the secreted. Functionally, zinc protease from snake venom that induces hemorrhage. This chain is Snake venom metalloproteinase HT-1, found in Crotalus ruber ruber (Red diamond rattlesnake).